We begin with the raw amino-acid sequence, 192 residues long: Probable apo-citrate lyase phosphoribosyl-dephospho-CoA transferase (192 aa).

Belongs to the CitX family.

The enzyme catalyses apo-[citrate lyase ACP] + 2'-(5''-triphospho-alpha-D-ribosyl)-3'-dephospho-CoA = holo-[citrate lyase ACP] + diphosphate. Transfers 2-(5''-triphosphoribosyl)-3'-dephosphocoenzyme-A on a serine residue to the apo-acyl carrier protein (gamma chain) of the citrate lyase to yield holo-acyl carrier protein. The sequence is that of Probable apo-citrate lyase phosphoribosyl-dephospho-CoA transferase from Streptococcus pyogenes serotype M6 (strain ATCC BAA-946 / MGAS10394).